Consider the following 43-residue polypeptide: Protein PsbN (43 aa).

The chain crosses the membrane as a helical span at residues 5–27; it reads TLVAISISCLLVSFTGYALYTAF.

It belongs to the PsbN family.

The protein resides in the plastid. Its subcellular location is the chloroplast thylakoid membrane. May play a role in photosystem I and II biogenesis. This is Protein PsbN from Cryptomeria japonica (Japanese cedar).